Reading from the N-terminus, the 163-residue chain is NADH-quinone oxidoreductase subunit 9 (163 aa).

2 4Fe-4S ferredoxin-type domains span residues Leu54–Glu84 and Thr94–Asn123. Positions 64, 67, 70, 74, 103, 106, 109, and 113 each coordinate [4Fe-4S] cluster.

It belongs to the complex I 23 kDa subunit family. In terms of assembly, NDH-1 is composed of at least 14 different subunits, Nqo1 to Nqo14. The complex has a L-shaped structure, with the hydrophobic arm (subunits Nqo7, Nqo8, Nqo10 to Nqo14) embedded in the inner membrane and the hydrophilic peripheral arm (subunits Nqo1 to Nqo6, Nqo9) protruding into the bacterial cytoplasm. The hydrophilic domain contains all the redox centers. [4Fe-4S] cluster serves as cofactor.

The protein localises to the cell inner membrane. It carries out the reaction a quinone + NADH + 5 H(+)(in) = a quinol + NAD(+) + 4 H(+)(out). In terms of biological role, NDH-1 shuttles electrons from NADH, via FMN and iron-sulfur (Fe-S) centers, to quinones in the respiratory chain. The immediate electron acceptor for the enzyme in this species is believed to be ubiquinone. Couples the redox reaction to proton translocation (for every two electrons transferred, four hydrogen ions are translocated across the cytoplasmic membrane), and thus conserves the redox energy in a proton gradient. The sequence is that of NADH-quinone oxidoreductase subunit 9 from Paracoccus denitrificans.